Reading from the N-terminus, the 79-residue chain is Large ribosomal subunit protein eL38 (79 aa).

It belongs to the eukaryotic ribosomal protein eL38 family.

This Theileria parva (East coast fever infection agent) protein is Large ribosomal subunit protein eL38 (RPL38).